We begin with the raw amino-acid sequence, 385 residues long: Elsinochromes biosynthesis cluster protein HP2 (385 aa).

The first 22 residues, methionine 1–aspartate 22, serve as a signal peptide directing secretion. A run of 2 helical transmembrane segments spans residues threonine 94 to aspartate 114 and phenylalanine 148 to tryptophan 168. The N-linked (GlcNAc...) asparagine glycan is linked to asparagine 187. Residues serine 209 to phenylalanine 229 form a helical membrane-spanning segment. N-linked (GlcNAc...) asparagine glycosylation occurs at asparagine 248. A run of 2 helical transmembrane segments spans residues alanine 309–alanine 329 and tyrosine 344–phenylalanine 364.

The protein resides in the membrane. Its function is as follows. Part of the gene cluster that mediates the biosynthesis of elsinochromes, pigments consisting of at least four interconvertible tautomers (A, B, C and D) that have a core phenolic quinone to which various side chains are attached and which play an important role in fungal pathogenesis. The non-reducing polyketide synthase PKS1 was proposed to iteratively catalyze decarboxylation between acetyl-CoA and malonyl-CoA subunits for polyketide chain elongation. The released polyketide undergoes cyclization to form an aromatic ring, and proceeds via serial modification steps to produce the heptaketide back- bone of elsinochrome. As elsinochrome has a symmetrical structure, two identical heptaketides are fused to form a core 1,2-dihydrobenzo-perylene ring structure, which can then be successively modified to produce the various derivatives of elsinochrome. Some of these reactions may be cooperatively carried out, at least in part, by the products of RDT1, OXR1 and PKS1. PRF1, embedded within the elsinochrome cluster possibly functions to stabilize some of the biosynthetic enzymes required for elsinochrome production. As prefoldin is a hexamer containing 2 a and 4 b subunits, additional prefoldin subunits, whose coding genes may not immediately link to the elsinochrome biosynthetic gene cluster, are required to fulfill the chaperone function. In addition, no methyltransferase-coding gene exists within the biosynthetic gene cluster, even though elsinochrome has four methyl groups at positions C3, C7, C8 and C12. Apparently, the identified gene cluster does not contain the entire entourage of genes responsible for elsinochrome biosynthesis. Once elsinochrome is synthesized, it must be exported outside the fungal cells, which is probably accomplished by the ECT1 transporter, to avoid toxicity. The polypeptide is Elsinochromes biosynthesis cluster protein HP2 (Elsinoe fawcettii (Citrus scab fungus)).